A 293-amino-acid polypeptide reads, in one-letter code: Lipoyl synthase (293 aa).

[4Fe-4S] cluster is bound by residues cysteine 47, cysteine 52, cysteine 58, cysteine 73, cysteine 77, cysteine 80, and serine 285. A Radical SAM core domain is found at 59 to 274 (WSEGTATFMI…EKIGLELGFR (216 aa)).

The protein belongs to the radical SAM superfamily. Lipoyl synthase family. It depends on [4Fe-4S] cluster as a cofactor.

It is found in the cytoplasm. It catalyses the reaction [[Fe-S] cluster scaffold protein carrying a second [4Fe-4S](2+) cluster] + N(6)-octanoyl-L-lysyl-[protein] + 2 oxidized [2Fe-2S]-[ferredoxin] + 2 S-adenosyl-L-methionine + 4 H(+) = [[Fe-S] cluster scaffold protein] + N(6)-[(R)-dihydrolipoyl]-L-lysyl-[protein] + 4 Fe(3+) + 2 hydrogen sulfide + 2 5'-deoxyadenosine + 2 L-methionine + 2 reduced [2Fe-2S]-[ferredoxin]. Its pathway is protein modification; protein lipoylation via endogenous pathway; protein N(6)-(lipoyl)lysine from octanoyl-[acyl-carrier-protein]: step 2/2. Functionally, catalyzes the radical-mediated insertion of two sulfur atoms into the C-6 and C-8 positions of the octanoyl moiety bound to the lipoyl domains of lipoate-dependent enzymes, thereby converting the octanoylated domains into lipoylated derivatives. The sequence is that of Lipoyl synthase from Christiangramia forsetii (strain DSM 17595 / CGMCC 1.15422 / KT0803) (Gramella forsetii).